We begin with the raw amino-acid sequence, 989 residues long: MTMAGGRRGLVAPQNTFLENIVRRSNDTNFVLGNAQIVDWPIVYSNDGFCKLSGYHRAEVMQKSSACSFMYGELTDKDTVEKVRQTFENYEMNSFEILMYKKNRTPVWFFVKIAPIRNEQDKVVLFLCTFSDITAFKQPIEDDSCKGWGKFARLTRALTSSRGVLQQLAPSVQKGENVHKHSRLAEVLQLGSDILPQYKQEAPKTPPHIILHYCVFKTTWDWIILILTFYTAILVPYNVSFKTRQNNVAWLVVDSIVDVIFLVDIVLNFHTTFVGPAGEVISDPKLIRMNYLKTWFVIDLLSCLPYDVINAFENVDEVSAFMGDPGKIGFADQIPPPLEGRESQGISSLFSSLKVVRLLRLGRVARKLDHYIEYGAAVLVLLVCVFGLAAHWMACIWYSIGDYEIFDEDTKTIRNNSWLYQLALDIGTPYQFNGSGSGKWEGGPSKNSVYISSLYFTMTSLTSVGFGNIAPSTDIEKIFAVAIMMIGSLLYATIFGNVTTIFQQMYANTNRYHEMLNSVRDFLKLYQVPKGLSERVMDYIVSTWSMSRGIDTEKVLQICPKDMRADICVHLNRKVFKEHPAFRLASDGCLRALAMEFQTVHCAPGDLIYHAGESVDSLCFVVSGSLEVIQDDEVVAILGKGDVFGDVFWKEATLAQSCANVRALTYCDLHVIKRDALQKVLEFYTAFSHSFSRNLILTYNLRKRIVFRKISDVKREEEERMKRKNEAPLILPPDHPVRRLFQRFRQQKEARLAAERGGRDLDDLDVEKGNALTDHTSANHSLVKASVVTVRESPATPVSFQAATTSTVSDHAKLHAPGSECLGPKAVSCDPAKRKGWARFKDACGKGEDWNKVSKAESMETLPERTKAPGEATLKKTDSCDSGITKSDLRLDNVGETRSPQDRSPILAEVKHSFYPIPEQTLQATVLEVKYELKEDIKALNAKMTSIEKQLSEILRILMSRGSAQSPQETGEISRPQSPESDRDIFGAS.

The Cytoplasmic portion of the chain corresponds to 1-220 (MTMAGGRRGL…LHYCVFKTTW (220 aa)). One can recognise a PAS domain in the interval 14–94 (QNTFLENIVR…QTFENYEMNS (81 aa)). The 53-residue stretch at 93–145 (NSFEILMYKKNRTPVWFFVKIAPIRNEQDKVVLFLCTFSDITAFKQPIEDDSC) folds into the PAC domain. The tract at residues 151–162 (FARLTRALTSSR) is required for phosphatidylinositol bisphosphate binding. Residues 221 to 241 (DWIILILTFYTAILVPYNVSF) form a helical membrane-spanning segment. Residues 242–248 (KTRQNNV) are Extracellular-facing. A helical transmembrane segment spans residues 249–269 (AWLVVDSIVDVIFLVDIVLNF). Residues 270-290 (HTTFVGPAGEVISDPKLIRMN) lie on the Cytoplasmic side of the membrane. The helical transmembrane segment at 291–309 (YLKTWFVIDLLSCLPYDVI) threads the bilayer. Residues 310–345 (NAFENVDEVSAFMGDPGKIGFADQIPPPLEGRESQG) lie on the Extracellular side of the membrane. A helical; Voltage-sensor membrane pass occupies residues 346-368 (ISSLFSSLKVVRLLRLGRVARKL). The Cytoplasmic segment spans residues 369–377 (DHYIEYGAA). A helical transmembrane segment spans residues 378–399 (VLVLLVCVFGLAAHWMACIWYS). At 400–448 (IGDYEIFDEDTKTIRNNSWLYQLALDIGTPYQFNGSGSGKWEGGPSKNS) the chain is on the extracellular side. N-linked (GlcNAc...) asparagine glycosylation is found at Asn415 and Asn433. Positions 449 to 470 (VYISSLYFTMTSLTSVGFGNIA) form an intramembrane region, pore-forming. A Selectivity filter motif is present at residues 463 to 468 (SVGFGN). The Extracellular segment spans residues 471 to 477 (PSTDIEK). A helical transmembrane segment spans residues 478–498 (IFAVAIMMIGSLLYATIFGNV). The Cytoplasmic segment spans residues 499–989 (TTIFQQMYAN…ESDRDIFGAS (491 aa)). Residues 673–770 (KRDALQKVLE…LDDLDVEKGN (98 aa)) are calmodulin-binding. Residues 699-701 (YNL) are interaction with cyclic nucleotide-binding pocket. Composition is skewed to basic and acidic residues over residues 857–879 (ESME…KTDS) and 887–901 (SDLR…RSPQ). Disordered regions lie at residues 857 to 905 (ESME…DRSP) and 961 to 989 (RGSA…FGAS). A CAD (involved in subunit assembly) region spans residues 924–964 (ATVLEVKYELKEDIKALNAKMTSIEKQLSEILRILMSRGSA). Positions 962–979 (GSAQSPQETGEISRPQSP) are enriched in polar residues. A phosphoserine mark is found at Ser974, Ser978, and Ser981. Basic and acidic residues predominate over residues 980 to 989 (ESDRDIFGAS).

This sequence belongs to the potassium channel family. H (Eag) (TC 1.A.1.20) subfamily. Kv10.1/KCNH1 sub-subfamily. Homomultimer. The potassium channel is composed of a homo- or heterotetrameric complex of pore-forming alpha subunits that can associate with modulating beta subunits. Heteromultimer with KCNH5/EAG2. Interacts with ALG10B. Interacts with RABEP1. Interacts (via C-terminus) with CTTN. Interacts (via C-terminal cytoplasmic region) with Ca(2+)-bound calmodulin. Post-translationally, channel activity is regulated via tyrosine phosphorylation/dephosphorylation by SRC and PTPN6. Detected in brain (at protein level). Highly expressed in olfactory bulb. Detected in brain cortex, hippocampus, brain stem, striatum, thalamus, hypothalamus and spinal cord.

The protein localises to the cell membrane. Its subcellular location is the nucleus inner membrane. The protein resides in the cell projection. It is found in the dendrite. It localises to the axon. The protein localises to the presynaptic cell membrane. Its subcellular location is the perikaryon. The protein resides in the postsynaptic density membrane. It is found in the early endosome membrane. The enzyme catalyses K(+)(in) = K(+)(out). With respect to regulation, channel activity is inhibited by interaction with Ca(2+)-bound calmodulin. Interaction of a single pore-forming alpha subunit with a calmodulin chain is sufficient to promote channel closure. Channel activity is not regulated by cyclic nucleotides. Channel activity is inhibited by binding intracellular phosphatidylinositol-3,5-bisphosphate and phosphatidylinositol-4,5-bisphosphate (PIP2), but is not inhibited by phosphatidylinositol 4-phosphate. In terms of biological role, pore-forming (alpha) subunit of a voltage-gated delayed rectifier potassium channel that mediates outward-rectifying potassium currents which, on depolarization, reaches a steady-state level and do not inactivate. The activation kinetics depend on the prepulse potential and external divalent cation concentration. With negative prepulses, the current activation is delayed and slowed down several fold, whereas more positive prepulses speed up activation. The time course of activation is biphasic with a fast and a slowly activating current component. Activates at more positive membrane potentials and exhibit a steeper activation curve. Channel properties are modulated by subunit assembly. Mediates IK(NI) current in myoblasts. Involved in the regulation of cell proliferation and differentiation, in particular adipogenic and osteogenic differentiation in bone marrow-derived mesenchymal stem cells (MSCs). This chain is Voltage-gated delayed rectifier potassium channel KCNH1, found in Mus musculus (Mouse).